The sequence spans 223 residues: Sigma non-opioid intracellular receptor 1 (223 aa).

Over 1–9 (MPWAAGRRW) the chain is Lumenal. The interval 2–8 (PWAAGRR) is targeting to endoplasmic reticulum-associated lipid droplets. The helical transmembrane segment at 10–30 (AWITLILTIIAVLIQAAWLWL) threads the bilayer. At 31-223 (GTQNFVFSRE…LTTYLFGQDS (193 aa)) the chain is on the cytoplasmic side. The tract at residues 99-106 (SLSEYVLL) is important for ligand-binding. A C-terminal hydrophobic region region spans residues 177–223 (VIPSTLFFALADTFFSTQDYLTLFYTLRAYARGLRLELTTYLFGQDS).

Belongs to the ERG2 family. Homotrimer. Interacts with KCNA4. Interacts with KCNA2; cocaine consumption leads to increased interaction. Forms a ternary complex with ANK2 and ITPR3. The complex is disrupted by agonists. Interacts with RNF112 in an oxidative stress-regulated manner. Widely expressed with higher expression in liver, brain, kidney and thymus. Expressed throughout the brain with higher expression within cerebral cortex, hippocampus and cerebellum. Within the hippocampus expressed in cornu ammonis pyramidal neurons, the granular cells of the dentate gyrus as well as interneurons. Within the cerebellum, expressed in Purkinje cell bodies. Highly expressed in the brainstem and motor neurons of the spinal cord. Expressed by neural retina, retinal pigment epithelial cells and lens.

It localises to the nucleus inner membrane. The protein resides in the nucleus outer membrane. The protein localises to the nucleus envelope. Its subcellular location is the cytoplasmic vesicle. It is found in the endoplasmic reticulum membrane. It localises to the membrane. The protein resides in the lipid droplet. The protein localises to the cell junction. Its subcellular location is the cell membrane. It is found in the cell projection. It localises to the growth cone. The protein resides in the postsynaptic density membrane. Functionally, functions in lipid transport from the endoplasmic reticulum and is involved in a wide array of cellular functions probably through regulation of the biogenesis of lipid microdomains at the plasma membrane. Involved in the regulation of different receptors it plays a role in BDNF signaling and EGF signaling. Also regulates ion channels like the potassium channel and could modulate neurotransmitter release. Plays a role in calcium signaling through modulation together with ANK2 of the ITP3R-dependent calcium efflux at the endoplasmic reticulum. Plays a role in several other cell functions including proliferation, survival and death. Originally identified for its ability to bind various psychoactive drugs it is involved in learning processes, memory and mood alteration. Necessary for proper mitochondrial axonal transport in motor neurons, in particular the retrograde movement of mitochondria. Plays a role in protecting cells against oxidative stress-induced cell death via its interaction with RNF112. The sequence is that of Sigma non-opioid intracellular receptor 1 (Sigmar1) from Mus musculus (Mouse).